The primary structure comprises 416 residues: Neamine transaminase NeoN (416 aa).

Position 231 is an N6-(pyridoxal phosphate)lysine (Lys-231).

It belongs to the class-III pyridoxal-phosphate-dependent aminotransferase family. Requires pyridoxal 5'-phosphate as cofactor.

The enzyme catalyses neomycin C + 2-oxoglutarate = 6'''-deamino-6'''-oxoneomycin C + L-glutamate. The catalysed reaction is neamine + 2-oxoglutarate = 6'-oxoparomamine + L-glutamate. It participates in antibiotic biosynthesis; neomycin biosynthesis. 6'-oxoglucosaminyl:L-glutamate aminotransferase that catalyzes pyridoxal-5'-phosphate-mediated transamination for the conversion of paromamine to neamine in the biosynthetic pathway of neomycin. Also able to catalyze deamination at C-6''' of neomycin. This chain is Neamine transaminase NeoN (neoN), found in Streptomyces fradiae (Streptomyces roseoflavus).